Here is a 458-residue protein sequence, read N- to C-terminus: Alpha-glucosides-binding periplasmic protein AglE (458 aa).

Residues 1 to 27 form the signal peptide; that stretch reads MKRSLLIGVAAFALLAGTAGLAGTAGA.

This sequence belongs to the bacterial solute-binding protein 1 family.

The protein localises to the periplasm. Its function is as follows. Part of the binding-protein-dependent transport system for alpha-glucosides such as sucrose, maltose and trehalose. This Rhizobium meliloti (strain 1021) (Ensifer meliloti) protein is Alpha-glucosides-binding periplasmic protein AglE (aglE).